Reading from the N-terminus, the 92-residue chain is Large ribosomal subunit protein bL25 (92 aa).

This sequence belongs to the bacterial ribosomal protein bL25 family. Part of the 50S ribosomal subunit; part of the 5S rRNA/L5/L18/L25 subcomplex. Contacts the 5S rRNA. Binds to the 5S rRNA independently of L5 and L18.

In terms of biological role, this is one of the proteins that binds to the 5S RNA in the ribosome where it forms part of the central protuberance. The sequence is that of Large ribosomal subunit protein bL25 from Vibrio campbellii (strain ATCC BAA-1116).